The following is a 251-amino-acid chain: Hydroxyacylglutathione hydrolase (251 aa).

Residues His53, His55, Asp57, His58, His110, Asp127, and His165 each coordinate Zn(2+).

Belongs to the metallo-beta-lactamase superfamily. Glyoxalase II family. Monomer. Zn(2+) serves as cofactor.

It catalyses the reaction an S-(2-hydroxyacyl)glutathione + H2O = a 2-hydroxy carboxylate + glutathione + H(+). The protein operates within secondary metabolite metabolism; methylglyoxal degradation; (R)-lactate from methylglyoxal: step 2/2. Thiolesterase that catalyzes the hydrolysis of S-D-lactoyl-glutathione to form glutathione and D-lactic acid. The sequence is that of Hydroxyacylglutathione hydrolase from Escherichia coli O6:H1 (strain CFT073 / ATCC 700928 / UPEC).